The primary structure comprises 161 residues: Peptidyl-prolyl cis-trans isomerase-like 1 (161 aa).

Residues 1–155 (MATDVVFDTS…DEVKIIRAKV (155 aa)) enclose the PPIase cyclophilin-type domain.

It belongs to the cyclophilin-type PPIase family. PPIL1 subfamily.

It catalyses the reaction [protein]-peptidylproline (omega=180) = [protein]-peptidylproline (omega=0). Its function is as follows. PPIases accelerate the folding of proteins. It catalyzes the cis-trans isomerization of proline imidic peptide bonds in oligopeptides. The polypeptide is Peptidyl-prolyl cis-trans isomerase-like 1 (cyp1) (Aspergillus fumigatus (strain ATCC MYA-4609 / CBS 101355 / FGSC A1100 / Af293) (Neosartorya fumigata)).